A 313-amino-acid polypeptide reads, in one-letter code: Olfactory receptor 1M1 (313 aa).

Residues 1-25 are Extracellular-facing; the sequence is MEPRNQTSASQFILLGLSEKPEQET. The N-linked (GlcNAc...) asparagine glycan is linked to Asn-5. A helical membrane pass occupies residues 26–49; sequence LLFSLFFCMYLVMVVGNLLIILAI. The Cytoplasmic portion of the chain corresponds to 50-57; that stretch reads SIDSHLHT. Residues 58-79 traverse the membrane as a helical segment; that stretch reads PMYFFLANLSLVDFCLATNTIP. Topologically, residues 80–100 are extracellular; that stretch reads KMLVSLQTGSKAISYPCCLIQ. Cys-97 and Cys-189 are oxidised to a cystine. The helical transmembrane segment at 101–120 threads the bilayer; that stretch reads MYFFHFFGIVDSVIIAMMAY. Residues 121–139 lie on the Cytoplasmic side of the membrane; the sequence is DRFVAICHPLHYAKIMSLR. Residues 140–158 traverse the membrane as a helical segment; sequence LCRLLVGALWAFSCFISLT. The Extracellular segment spans residues 159–196; it reads HILLMARLVFCGSHEVPHYFCDLTPILRLSCTDTSVNR. Residues 197–219 form a helical membrane-spanning segment; the sequence is IFILIVAGMVIATPFVCILASYA. At 220–236 the chain is on the cytoplasmic side; that stretch reads RILVAIMKVPSAGGRKK. The helical transmembrane segment at 237–259 threads the bilayer; the sequence is AFSTCSSHLSVVALFYGTTIGVY. Over 260 to 272 the chain is Extracellular; sequence LCPSSVLTTVKEK. Residues 273 to 292 traverse the membrane as a helical segment; that stretch reads ASAVMYTAVTPMLNPFIYSL. The Cytoplasmic segment spans residues 293-313; the sequence is RNRDLKGALRKLVNRKITSSS.

This sequence belongs to the G-protein coupled receptor 1 family.

The protein resides in the cell membrane. Functionally, odorant receptor. This chain is Olfactory receptor 1M1, found in Homo sapiens (Human).